Consider the following 439-residue polypeptide: GTPase Der (439 aa).

EngA-type G domains lie at 4–169 (AMVS…PQEE) and 177–352 (IKIA…EEYN). GTP is bound by residues 10–17 (GRPNVGKS), 57–61 (DTGGL), 120–123 (NKVD), 183–190 (GKPNVGKS), 230–234 (DTAGI), and 295–298 (NKWD). Residues 353–437 (KRITTGLLNN…PVVISTRKRG (85 aa)) form the KH-like domain.

It belongs to the TRAFAC class TrmE-Era-EngA-EngB-Septin-like GTPase superfamily. EngA (Der) GTPase family. Associates with the 50S ribosomal subunit.

Its function is as follows. GTPase that plays an essential role in the late steps of ribosome biogenesis. In Thermoanaerobacter pseudethanolicus (strain ATCC 33223 / 39E) (Clostridium thermohydrosulfuricum), this protein is GTPase Der.